Here is a 199-residue protein sequence, read N- to C-terminus: Potassium-transporting ATPase KdpC subunit (199 aa).

A helical transmembrane segment spans residues 7–27 (PAIVLLLALTLLTGLAYPLAM). The tract at residues 67–86 (HGRPSATTAADPQDSSKTVP) is disordered. The span at 71-84 (SATTAADPQDSSKT) shows a compositional bias: polar residues.

It belongs to the KdpC family. In terms of assembly, the system is composed of three essential subunits: KdpA, KdpB and KdpC.

It localises to the cell inner membrane. Functionally, part of the high-affinity ATP-driven potassium transport (or Kdp) system, which catalyzes the hydrolysis of ATP coupled with the electrogenic transport of potassium into the cytoplasm. This subunit acts as a catalytic chaperone that increases the ATP-binding affinity of the ATP-hydrolyzing subunit KdpB by the formation of a transient KdpB/KdpC/ATP ternary complex. The chain is Potassium-transporting ATPase KdpC subunit from Rhodopseudomonas palustris (strain BisB18).